The chain runs to 744 residues: FNIP repeat-containing protein cigB (744 aa).

FNIP repeat units lie at residues 340–376, 383–422, 426–462, 469–508, 512–550, 555–594, 598–635, 641–678, and 684–723; these read FNQK…TVTT, FNQK…TVIL, FNQK…TVTR, FNQK…TITL, FNQK…TTVR, FNQK…VTTV, and FNQK…NVYI.

This chain is FNIP repeat-containing protein cigB (cigB), found in Dictyostelium discoideum (Social amoeba).